Consider the following 248-residue polypeptide: Caffeoyl-CoA O-methyltransferase 3 (248 aa).

Lys22 is a binding site for substrate. Residues Thr64, Glu86, 88–89 (GV), Ser94, Asp112, and Ala141 contribute to the S-adenosyl-L-methionine site. Residue Asp164 coordinates substrate. Asp164 serves as a coordination point for a divalent metal cation. Residue Asp166 participates in S-adenosyl-L-methionine binding. A divalent metal cation contacts are provided by Asp190 and Asn191. Position 195 (Asn195) interacts with substrate.

The protein belongs to the class I-like SAM-binding methyltransferase superfamily. Cation-dependent O-methyltransferase family. CCoAMT subfamily. The cofactor is a divalent metal cation. Mostly expressed in petal limbs and tubes, and, at low levels, in stems, roots and leaves.

The protein resides in the cytoplasm. The protein localises to the cytosol. The catalysed reaction is (E)-caffeoyl-CoA + S-adenosyl-L-methionine = (E)-feruloyl-CoA + S-adenosyl-L-homocysteine + H(+). It carries out the reaction (E)-5-hydroxyferuloyl-CoA + S-adenosyl-L-methionine = (E)-sinapoyl-CoA + S-adenosyl-L-homocysteine + H(+). Its pathway is aromatic compound metabolism; phenylpropanoid biosynthesis. Its function is as follows. Involved in the production of floral volatile phenylpropanoids in flowers of fragrant cultivars (e.g. cv. Mitchell and cv. V26) from cinnamic acid, a common precursor with the anthocyanin biosynthesis pathway involved in flower pigmentation. Methylates caffeoyl-CoA to feruloyl-CoA, also able to methylate 5-hydroxyferuloyl-CoA. The chain is Caffeoyl-CoA O-methyltransferase 3 from Petunia hybrida (Petunia).